A 543-amino-acid chain; its full sequence is Allantoate permease (543 aa).

The Cytoplasmic portion of the chain corresponds to methionine 1 to lysine 80. Residues isoleucine 81 to phenylalanine 97 form a helical membrane-spanning segment. At methionine 98–serine 123 the chain is on the extracellular side. Residues tryptophan 124–phenylalanine 145 traverse the membrane as a helical segment. The Cytoplasmic segment spans residues glutamine 146–methionine 154. Residues leucine 155–alanine 171 traverse the membrane as a helical segment. The Extracellular portion of the chain corresponds to proline 172–serine 178. The helical transmembrane segment at phenylalanine 179–isoleucine 200 threads the bilayer. The Cytoplasmic portion of the chain corresponds to threonine 201 to arginine 213. A helical membrane pass occupies residues valine 214–isoleucine 237. The Extracellular portion of the chain corresponds to histidine 238–arginine 248. Residues threonine 249–isoleucine 269 form a helical membrane-spanning segment. Over proline 270–threonine 317 the chain is Cytoplasmic. A helical membrane pass occupies residues tryptophan 318–leucine 342. The Extracellular segment spans residues asparagine 343 to glutamate 352. Residues threonine 353–tyrosine 377 form a helical membrane-spanning segment. Residues alanine 378–lysine 389 lie on the Cytoplasmic side of the membrane. The helical transmembrane segment at leucine 390–threonine 411 threads the bilayer. Residues asparagine 412 to arginine 417 lie on the Extracellular side of the membrane. A helical membrane pass occupies residues leucine 418–leucine 435. At serine 436–serine 453 the chain is on the cytoplasmic side. The chain crosses the membrane as a helical span at residues isoleucine 454–alanine 472. The Extracellular segment spans residues lysine 473–lysine 482. A helical membrane pass occupies residues valine 483–leucine 504. Residues arginine 505–leucine 543 are Cytoplasmic-facing.

It belongs to the major facilitator superfamily. Allantoate permease family.

The protein resides in the membrane. In terms of biological role, component of the allantoate transport system. The chain is Allantoate permease (DAL5) from Saccharomyces cerevisiae (strain ATCC 204508 / S288c) (Baker's yeast).